We begin with the raw amino-acid sequence, 157 residues long: Myosin essential light chain, striated adductor muscle (157 aa).

2 EF-hand domains span residues 7–44 (DEIDDLKDVFELFDFWDGRDGAVDAFKLGDVCRCLGIN) and 82–117 (GTFADYMEAFKTFDREGQGFISGAELRHVLTALGER).

Its function is as follows. In molluscan muscle, calcium regulation is associated with myosin rather than with actin. Muscle myosin contains two types of light chains: the catalytic light chain, essential for ATPase activity, and the regulatory light chain, a calcium-binding protein responsible for Ca(2+) dependent binding and Ca(2+) dependent Mg-ATPase activity. In Argopecten irradians (Bay scallop), this protein is Myosin essential light chain, striated adductor muscle.